The following is a 297-amino-acid chain: Homoserine kinase (297 aa).

Residue 82-92 (PLTRGLGSSAS) participates in ATP binding.

The protein belongs to the GHMP kinase family. Homoserine kinase subfamily.

The protein localises to the cytoplasm. It catalyses the reaction L-homoserine + ATP = O-phospho-L-homoserine + ADP + H(+). The protein operates within amino-acid biosynthesis; L-threonine biosynthesis; L-threonine from L-aspartate: step 4/5. Functionally, catalyzes the ATP-dependent phosphorylation of L-homoserine to L-homoserine phosphate. The sequence is that of Homoserine kinase from Bacillus cereus (strain G9842).